A 79-amino-acid chain; its full sequence is Small ribosomal subunit protein uS17 (79 aa).

The protein belongs to the universal ribosomal protein uS17 family. As to quaternary structure, part of the 30S ribosomal subunit.

In terms of biological role, one of the primary rRNA binding proteins, it binds specifically to the 5'-end of 16S ribosomal RNA. The polypeptide is Small ribosomal subunit protein uS17 (Rhodospirillum rubrum (strain ATCC 11170 / ATH 1.1.1 / DSM 467 / LMG 4362 / NCIMB 8255 / S1)).